We begin with the raw amino-acid sequence, 141 residues long: Galactose-6-phosphate isomerase subunit LacA 1 (141 aa).

The protein belongs to the LacAB/RpiB family. As to quaternary structure, heteromultimeric protein consisting of LacA and LacB.

It carries out the reaction aldehydo-D-galactose 6-phosphate = keto-D-tagatose 6-phosphate. It participates in carbohydrate metabolism; D-galactose 6-phosphate degradation; D-tagatose 6-phosphate from D-galactose 6-phosphate: step 1/1. The chain is Galactose-6-phosphate isomerase subunit LacA 1 from Streptococcus agalactiae serotype III (strain NEM316).